Reading from the N-terminus, the 480-residue chain is F-box/LRR-repeat protein 14 (480 aa).

In terms of domain architecture, F-box spans Asp-11–Ile-58. LRR repeat units lie at residues Gly-61–Tyr-86, Gly-94–Phe-119, Cys-120–Phe-144, Ala-145–Arg-170, Cys-171–Asn-196, Cys-197–Val-222, Met-229–Asn-257, Cys-258–Met-283, Cys-284–Val-309, Thr-322–Phe-347, Leu-355–His-379, Val-380–His-404, Cys-405–Lys-429, Cys-430–Asp-454, and Cys-455–Tyr-480.

The protein is F-box/LRR-repeat protein 14 (FBL14) of Arabidopsis thaliana (Mouse-ear cress).